A 272-amino-acid polypeptide reads, in one-letter code: METYAVFGNPIAHSKSPFIHQQFAQQLNIEHPYGRVLAPINDFINTLNAFFSAGGKGANVTVPFKEEAFARADELTERAALAGAVNTLKRLEDGRLLGDNTDGIGLLSDLERLSFIRPGLRILLIGAGGASRGVLLPLLSLDCAVTITNRTVSRAEELTKLFAHTGSIQALGMDELEGHEFDLIINATSSGISGDIPAIPSSLIHPGIYCYDMFYQKGKTPFLAWCEQRGSKRNADGLGMLVAQAAHAFLLWHGVLPDVEPVIKLLQQELSA.

Residues 14–16 (SKS) and T61 contribute to the shikimate site. K65 (proton acceptor) is an active-site residue. E77 lines the NADP(+) pocket. The shikimate site is built by N86 and D102. NADP(+) is bound by residues 126–130 (GAGGA), 149–154 (NRTVSR), and M213. Shikimate is bound at residue Y215. G237 contacts NADP(+).

It belongs to the shikimate dehydrogenase family. In terms of assembly, homodimer.

The catalysed reaction is shikimate + NADP(+) = 3-dehydroshikimate + NADPH + H(+). It functions in the pathway metabolic intermediate biosynthesis; chorismate biosynthesis; chorismate from D-erythrose 4-phosphate and phosphoenolpyruvate: step 4/7. Involved in the biosynthesis of the chorismate, which leads to the biosynthesis of aromatic amino acids. Catalyzes the reversible NADPH linked reduction of 3-dehydroshikimate (DHSA) to yield shikimate (SA). The polypeptide is Shikimate dehydrogenase (NADP(+)) (Escherichia coli O45:K1 (strain S88 / ExPEC)).